Reading from the N-terminus, the 345-residue chain is Phosphoribosylformylglycinamidine cyclo-ligase (345 aa).

The protein belongs to the AIR synthase family.

Its subcellular location is the cytoplasm. It catalyses the reaction 2-formamido-N(1)-(5-O-phospho-beta-D-ribosyl)acetamidine + ATP = 5-amino-1-(5-phospho-beta-D-ribosyl)imidazole + ADP + phosphate + H(+). Its pathway is purine metabolism; IMP biosynthesis via de novo pathway; 5-amino-1-(5-phospho-D-ribosyl)imidazole from N(2)-formyl-N(1)-(5-phospho-D-ribosyl)glycinamide: step 2/2. The sequence is that of Phosphoribosylformylglycinamidine cyclo-ligase from Limosilactobacillus reuteri (strain DSM 20016) (Lactobacillus reuteri).